The following is a 493-amino-acid chain: 3-octaprenyl-4-hydroxybenzoate carboxy-lyase (493 aa).

Asn-172 lines the Mn(2+) pocket. Prenylated FMN-binding positions include 175 to 177 (IYR), 189 to 191 (RWL), and 194 to 195 (RG). Glu-238 provides a ligand contact to Mn(2+). Asp-287 serves as the catalytic Proton donor.

This sequence belongs to the UbiD family. As to quaternary structure, homohexamer. Prenylated FMN serves as cofactor. Requires Mn(2+) as cofactor.

Its subcellular location is the cell membrane. The catalysed reaction is a 4-hydroxy-3-(all-trans-polyprenyl)benzoate + H(+) = a 2-(all-trans-polyprenyl)phenol + CO2. Its pathway is cofactor biosynthesis; ubiquinone biosynthesis. Functionally, catalyzes the decarboxylation of 3-octaprenyl-4-hydroxy benzoate to 2-octaprenylphenol, an intermediate step in ubiquinone biosynthesis. This Shewanella sp. (strain MR-4) protein is 3-octaprenyl-4-hydroxybenzoate carboxy-lyase.